A 413-amino-acid chain; its full sequence is Serine/threonine transporter SstT (413 aa).

8 helical membrane passes run 19-39 (IFIG…LQNV), 61-81 (AVAP…KKIG), 89-109 (IIVL…IAGF), 148-168 (ALFK…GLAL), 189-209 (IVYV…SETL), 223-243 (LLAV…PILV), 297-317 (IPLG…ILTL), and 325-345 (IQIS…CACG).

Belongs to the dicarboxylate/amino acid:cation symporter (DAACS) (TC 2.A.23) family.

Its subcellular location is the cell inner membrane. It carries out the reaction L-serine(in) + Na(+)(in) = L-serine(out) + Na(+)(out). The enzyme catalyses L-threonine(in) + Na(+)(in) = L-threonine(out) + Na(+)(out). Its function is as follows. Involved in the import of serine and threonine into the cell, with the concomitant import of sodium (symport system). The polypeptide is Serine/threonine transporter SstT (Pasteurella multocida (strain Pm70)).